A 104-amino-acid polypeptide reads, in one-letter code: V-type ATP synthase subunit F (104 aa).

The protein belongs to the V-ATPase F subunit family.

In terms of biological role, produces ATP from ADP in the presence of a proton gradient across the membrane. The polypeptide is V-type ATP synthase subunit F (atpF) (Thermus thermophilus (strain ATCC 27634 / DSM 579 / HB8)).